The following is a 90-amino-acid chain: Probable Fe(2+)-trafficking protein (90 aa).

This sequence belongs to the Fe(2+)-trafficking protein family.

Its function is as follows. Could be a mediator in iron transactions between iron acquisition and iron-requiring processes, such as synthesis and/or repair of Fe-S clusters in biosynthetic enzymes. The protein is Probable Fe(2+)-trafficking protein of Cupriavidus taiwanensis (strain DSM 17343 / BCRC 17206 / CCUG 44338 / CIP 107171 / LMG 19424 / R1) (Ralstonia taiwanensis (strain LMG 19424)).